The sequence spans 296 residues: MLYEQIQSNKRRTVFLLIGFLALVGIVGAAVGYLLLKSLVTGIIGALLVGVIYAVIMISNATDVVMAMNHGTEVTSADQAPELWHTVEDMAMVAQVPMPRVFIIEDESPNAFATGNNPKNAAVAATTGLIALMNRNELEGVIGHEISHVRNYDIRISTIALALTAAISFLINLGSNWWLFGSGSRDRDNRDSGGGGQLLVFILSLVVMIFAPLVAAVIQMAISRNREYLADAGSVALTRNPQELIAALRKLNSAPPMSHVDESSAALYISDPLKKKARLFDTHPPIEERIARLEKM.

Transmembrane regions (helical) follow at residues 14-34 (VFLLIGFLALVGIVGAAVGYL) and 38-58 (SLVTGIIGALLVGVIYAVIMI). A Zn(2+)-binding site is contributed by H144. E145 is a catalytic residue. Residue H148 coordinates Zn(2+). 2 consecutive transmembrane segments (helical) span residues 159-179 (IALALTAAISFLINLGSNWWL) and 198-218 (LLVFILSLVVMIFAPLVAAVI). E227 is a Zn(2+) binding site.

The protein belongs to the peptidase M48B family. The cofactor is Zn(2+).

It is found in the cell membrane. The sequence is that of Protease HtpX homolog from Leuconostoc citreum (strain KM20).